A 745-amino-acid chain; its full sequence is Copper-transporting ATPase (745 aa).

Residues 1–67 (MKESFYIEGM…LIEKLGYSPK (67 aa)) enclose the HMA domain. The Cytoplasmic segment spans residues 1-83 (MKESFYIEGM…KKEFFSPNVK (83 aa)). Cys12 and Cys15 together coordinate Cu cation. A helical transmembrane segment spans residues 84 to 104 (LALAVIFTLFVVYLSMGAMLS). Residues 105-124 (PSLLPESLLAINNHSNFLNA) are Extracellular-facing. Residues 125-144 (CLQLIGALIVMHLGRDFYIQ) traverse the membrane as a helical segment. Residues 145 to 151 (GFKALWH) lie on the Cytoplasmic side of the membrane. A helical transmembrane segment spans residues 152-172 (RQPNMSSLIAIGTSAALISSL). Over 173 to 194 (WQLYLVYTNHYTDQWSYGHYYF) the chain is Extracellular. Residues 195–215 (ESVCVILMFVMVGKRIENVSK) traverse the membrane as a helical segment. Residues 216–343 (DKALDAMQAL…KAEISRLADK (128 aa)) lie on the Cytoplasmic side of the membrane. Residues 344 to 366 (VSSVFVPSVIAIAILAFVVWLII) form a helical membrane-spanning segment. Over 367 to 379 (APKPDFWWNFGIA) the chain is Extracellular. Residues 380 to 397 (LEVFVSVLVISCPCALGL) form a helical membrane-spanning segment. Residues 398–685 (ATPMSILVAN…KLSQATIKNI (288 aa)) are Cytoplasmic-facing. Catalysis depends on Asp435, which acts as the 4-aspartylphosphate intermediate. Mg(2+) contacts are provided by Asp631 and Asp635. A helical transmembrane segment spans residues 686–705 (KENLFWAFCYNSVFIPLACG). At 706 to 716 (VLYKANIMLSP) the chain is on the extracellular side. The helical transmembrane segment at 717 to 735 (AIAGLAMSLSSVSVVLNSQ) threads the bilayer. Topologically, residues 736 to 745 (RLRNFKIKDH) are cytoplasmic.

This sequence belongs to the cation transport ATPase (P-type) (TC 3.A.3) family. Type IB subfamily.

It localises to the cell membrane. The catalysed reaction is Cu(2+)(in) + ATP + H2O = Cu(2+)(out) + ADP + phosphate + H(+). Probably involved in copper export. The polypeptide is Copper-transporting ATPase (copA) (Helicobacter pylori (Campylobacter pylori)).